The primary structure comprises 307 residues: Elongation factor Ts (307 aa).

The involved in Mg(2+) ion dislocation from EF-Tu stretch occupies residues 79–82 (TDFV).

Belongs to the EF-Ts family.

Its subcellular location is the cytoplasm. Its function is as follows. Associates with the EF-Tu.GDP complex and induces the exchange of GDP to GTP. It remains bound to the aminoacyl-tRNA.EF-Tu.GTP complex up to the GTP hydrolysis stage on the ribosome. The polypeptide is Elongation factor Ts (Bartonella tribocorum (strain CIP 105476 / IBS 506)).